We begin with the raw amino-acid sequence, 259 residues long: Phosphoadenosine 5'-phosphosulfate reductase (259 aa).

Cys244 functions as the Nucleophile; cysteine thiosulfonate intermediate in the catalytic mechanism.

This sequence belongs to the PAPS reductase family. CysH subfamily.

The protein localises to the cytoplasm. It carries out the reaction [thioredoxin]-disulfide + sulfite + adenosine 3',5'-bisphosphate + 2 H(+) = [thioredoxin]-dithiol + 3'-phosphoadenylyl sulfate. It participates in sulfur metabolism; hydrogen sulfide biosynthesis; sulfite from sulfate: step 3/3. In terms of biological role, catalyzes the formation of sulfite from phosphoadenosine 5'-phosphosulfate (PAPS) using thioredoxin as an electron donor. In Vibrio parahaemolyticus serotype O3:K6 (strain RIMD 2210633), this protein is Phosphoadenosine 5'-phosphosulfate reductase.